A 136-amino-acid chain; its full sequence is uncharacterized protein (136 aa).

A disordered region spans residues 1-100 (MQSREPSGWR…PCSGGPDRPE (100 aa)). Residues 66–75 (RLLRWHHRVP) are compositionally biased toward basic residues.

This is an uncharacterized protein from Homo sapiens (Human).